Reading from the N-terminus, the 264-residue chain is 3-methyl-2-oxobutanoate hydroxymethyltransferase (264 aa).

Mg(2+)-binding residues include Asp45 and Asp84. Residues 45–46 (DS), Asp84, and Lys112 contribute to the 3-methyl-2-oxobutanoate site. Residue Glu114 participates in Mg(2+) binding. Glu181 acts as the Proton acceptor in catalysis.

This sequence belongs to the PanB family. As to quaternary structure, homodecamer; pentamer of dimers. The cofactor is Mg(2+).

It localises to the cytoplasm. The enzyme catalyses 3-methyl-2-oxobutanoate + (6R)-5,10-methylene-5,6,7,8-tetrahydrofolate + H2O = 2-dehydropantoate + (6S)-5,6,7,8-tetrahydrofolate. It functions in the pathway cofactor biosynthesis; (R)-pantothenate biosynthesis; (R)-pantoate from 3-methyl-2-oxobutanoate: step 1/2. In terms of biological role, catalyzes the reversible reaction in which hydroxymethyl group from 5,10-methylenetetrahydrofolate is transferred onto alpha-ketoisovalerate to form ketopantoate. In Aeromonas hydrophila subsp. hydrophila (strain ATCC 7966 / DSM 30187 / BCRC 13018 / CCUG 14551 / JCM 1027 / KCTC 2358 / NCIMB 9240 / NCTC 8049), this protein is 3-methyl-2-oxobutanoate hydroxymethyltransferase.